The chain runs to 420 residues: Small ribosomal subunit protein mS75 (420 aa).

The transit peptide at 1 to 11 (MYNLSRIIYRF) directs the protein to the mitochondrion. Disordered stretches follow at residues 99-120 (RQKN…DVMS) and 390-420 (RYSP…GKQT). Residues 102–114 (NAANPSSDNTPSD) show a composition bias toward polar residues. The segment covering 396 to 409 (QKRRSKRKQKRKER) has biased composition (basic residues).

As to quaternary structure, component of the mitochondrial ribosome small subunit. As to expression, expressed at high levels in reproductive organs and, at lower levels, ubiquitously.

The protein resides in the mitochondrion. Functionally, essential for fertility (male and female gametophyte functions and development). Required for the integrity of female gametic mitochondria. Modulates male gametophyte functions, including pollen tube growth and style penetration. Involved in mitochondrial-driven cell-to-cell communication in embryo sacs during female gametes maturation (including embryogenesis initiation and endosperm development), especially for reciprocal signaling between central and egg cells which regulates reciprocal development. This chain is Small ribosomal subunit protein mS75, found in Arabidopsis thaliana (Mouse-ear cress).